The chain runs to 244 residues: Glucosamine-6-phosphate deaminase (244 aa).

The active-site Proton acceptor; for enolization step is aspartate 67. The active-site For ring-opening step is asparagine 136. The Proton acceptor; for ring-opening step role is filled by histidine 138. The For ring-opening step role is filled by glutamate 143.

This sequence belongs to the glucosamine/galactosamine-6-phosphate isomerase family. NagB subfamily.

It catalyses the reaction alpha-D-glucosamine 6-phosphate + H2O = beta-D-fructose 6-phosphate + NH4(+). It functions in the pathway amino-sugar metabolism; N-acetylneuraminate degradation; D-fructose 6-phosphate from N-acetylneuraminate: step 5/5. In terms of biological role, catalyzes the reversible isomerization-deamination of glucosamine 6-phosphate (GlcN6P) to form fructose 6-phosphate (Fru6P) and ammonium ion. This chain is Glucosamine-6-phosphate deaminase, found in Clostridium botulinum (strain 657 / Type Ba4).